The sequence spans 223 residues: Phosphoribosylformylglycinamidine synthase subunit PurQ (223 aa).

The Glutamine amidotransferase type-1 domain maps to 4–223 (FAVVVFPGTN…FKGMVEWVRS (220 aa)). Catalysis depends on Cys85, which acts as the Nucleophile. Active-site residues include His196 and Glu198.

As to quaternary structure, part of the FGAM synthase complex composed of 1 PurL, 1 PurQ and 2 PurS subunits.

The protein resides in the cytoplasm. The catalysed reaction is N(2)-formyl-N(1)-(5-phospho-beta-D-ribosyl)glycinamide + L-glutamine + ATP + H2O = 2-formamido-N(1)-(5-O-phospho-beta-D-ribosyl)acetamidine + L-glutamate + ADP + phosphate + H(+). It catalyses the reaction L-glutamine + H2O = L-glutamate + NH4(+). It participates in purine metabolism; IMP biosynthesis via de novo pathway; 5-amino-1-(5-phospho-D-ribosyl)imidazole from N(2)-formyl-N(1)-(5-phospho-D-ribosyl)glycinamide: step 1/2. Its function is as follows. Part of the phosphoribosylformylglycinamidine synthase complex involved in the purines biosynthetic pathway. Catalyzes the ATP-dependent conversion of formylglycinamide ribonucleotide (FGAR) and glutamine to yield formylglycinamidine ribonucleotide (FGAM) and glutamate. The FGAM synthase complex is composed of three subunits. PurQ produces an ammonia molecule by converting glutamine to glutamate. PurL transfers the ammonia molecule to FGAR to form FGAM in an ATP-dependent manner. PurS interacts with PurQ and PurL and is thought to assist in the transfer of the ammonia molecule from PurQ to PurL. This chain is Phosphoribosylformylglycinamidine synthase subunit PurQ, found in Pyrococcus furiosus (strain ATCC 43587 / DSM 3638 / JCM 8422 / Vc1).